Here is a 218-residue protein sequence, read N- to C-terminus: Ribose-5-phosphate isomerase A (218 aa).

Substrate-binding positions include 28-31 (TGST), 81-84 (DGAD), and 94-97 (KGGG). E103 serves as the catalytic Proton acceptor. K121 lines the substrate pocket.

It belongs to the ribose 5-phosphate isomerase family. As to quaternary structure, homodimer.

It catalyses the reaction aldehydo-D-ribose 5-phosphate = D-ribulose 5-phosphate. The protein operates within carbohydrate degradation; pentose phosphate pathway; D-ribose 5-phosphate from D-ribulose 5-phosphate (non-oxidative stage): step 1/1. Its function is as follows. Catalyzes the reversible conversion of ribose-5-phosphate to ribulose 5-phosphate. This chain is Ribose-5-phosphate isomerase A, found in Vibrio parahaemolyticus serotype O3:K6 (strain RIMD 2210633).